The sequence spans 931 residues: Chitin synthase III (931 aa).

N37 and N94 each carry an N-linked (GlcNAc...) asparagine glycan. The segment at 93–154 (PNASQLPPAG…PGGVGQAGGL (62 aa)) is disordered. Over residues 102 to 122 (GSGGFGDNGFGQYGQPQGFGG) the composition is skewed to gly residues. The N-linked (GlcNAc...) asparagine glycan is linked to N558. Transmembrane regions (helical) follow at residues 585 to 605 (FFLH…WFSL), 644 to 664 (IINA…FILA), 677 to 697 (IASF…SGYL), 731 to 751 (VILI…FLYL), and 759 to 779 (SFPY…VYAF). N802 carries an N-linked (GlcNAc...) asparagine glycan. Helical transmembrane passes span 858–878 (TGLV…ITSD) and 899–919 (FLLY…LWFL).

This sequence belongs to the chitin synthase family. Class III subfamily. As to expression, highly expressed in conidia and during appressorium formation.

Its subcellular location is the cell membrane. It catalyses the reaction [(1-&gt;4)-N-acetyl-beta-D-glucosaminyl](n) + UDP-N-acetyl-alpha-D-glucosamine = [(1-&gt;4)-N-acetyl-beta-D-glucosaminyl](n+1) + UDP + H(+). Polymerizes chitin, a structural polymer of the cell wall and septum, by transferring the sugar moiety of UDP-GlcNAc to the non-reducing end of the growing chitin polymer. Contributes to the production of conidia and the ability of fungal conidia to germinate. Involved in the fungal cell wall integrity and the ability of conidia to withstand biophysical pressure. Required for appressorium formation and evasion of insect cellular and/or humoral defenses, promoting the fungal dimorphic transition to the production of hyphal bodies that occurs within hosts, and ultimately to virulence. The polypeptide is Chitin synthase III (Metarhizium acridum (strain CQMa 102)).